The sequence spans 265 residues: Phosphonates import ATP-binding protein PhnC 1 (265 aa).

Positions 3–247 (LRLSGIELRH…HLDTLYANEQ (245 aa)) constitute an ABC transporter domain. Position 36-43 (36-43 (GPSGAGKT)) interacts with ATP. The disordered stretch occupies residues 245 to 265 (NEQLSPQPAPDVSETPWTPRC).

This sequence belongs to the ABC transporter superfamily. Phosphonates importer (TC 3.A.1.9.1) family. The complex is composed of two ATP-binding proteins (PhnC), two transmembrane proteins (PhnE) and a solute-binding protein (PhnD).

The protein resides in the cell inner membrane. It catalyses the reaction phosphonate(out) + ATP + H2O = phosphonate(in) + ADP + phosphate + H(+). In terms of biological role, part of the ABC transporter complex PhnCDE involved in phosphonates import. Responsible for energy coupling to the transport system. The sequence is that of Phosphonates import ATP-binding protein PhnC 1 from Pseudomonas savastanoi pv. phaseolicola (strain 1448A / Race 6) (Pseudomonas syringae pv. phaseolicola (strain 1448A / Race 6)).